A 165-amino-acid chain; its full sequence is Phosphopantetheine adenylyltransferase (165 aa).

Position 9 (Ser9) interacts with substrate. Residues 9 to 10 and His17 contribute to the ATP site; that span reads SF. 3 residues coordinate substrate: Lys41, Ile75, and Arg89. ATP is bound by residues 90–92, Glu100, and 125–131; these read GVR and YLFVRSD.

The protein belongs to the bacterial CoaD family. Homohexamer. It depends on Mg(2+) as a cofactor.

The protein resides in the cytoplasm. The catalysed reaction is (R)-4'-phosphopantetheine + ATP + H(+) = 3'-dephospho-CoA + diphosphate. The protein operates within cofactor biosynthesis; coenzyme A biosynthesis; CoA from (R)-pantothenate: step 4/5. Its function is as follows. Reversibly transfers an adenylyl group from ATP to 4'-phosphopantetheine, yielding dephospho-CoA (dPCoA) and pyrophosphate. This chain is Phosphopantetheine adenylyltransferase, found in Borrelia duttonii (strain Ly).